Consider the following 502-residue polypeptide: Probable cytosol aminopeptidase (502 aa).

Mn(2+) is bound by residues Lys-275 and Asp-280. Lys-287 is an active-site residue. The Mn(2+) site is built by Asp-298, Asp-357, and Glu-359. Residue Arg-361 is part of the active site.

Belongs to the peptidase M17 family. Mn(2+) serves as cofactor.

Its subcellular location is the cytoplasm. The enzyme catalyses Release of an N-terminal amino acid, Xaa-|-Yaa-, in which Xaa is preferably Leu, but may be other amino acids including Pro although not Arg or Lys, and Yaa may be Pro. Amino acid amides and methyl esters are also readily hydrolyzed, but rates on arylamides are exceedingly low.. It catalyses the reaction Release of an N-terminal amino acid, preferentially leucine, but not glutamic or aspartic acids.. Presumably involved in the processing and regular turnover of intracellular proteins. Catalyzes the removal of unsubstituted N-terminal amino acids from various peptides. The chain is Probable cytosol aminopeptidase from Ralstonia pickettii (strain 12J).